The primary structure comprises 364 residues: uncharacterized protein (364 aa).

This is an uncharacterized protein from Acanthamoeba polyphaga mimivirus (APMV).